The primary structure comprises 433 residues: MSLVRTRFAPSPTGYLHIGGARTALFNWLFARKMGGTFILRIEDTDNARNTEEATRAIFTGMEWLGLDWDEGPMKGGDCGPYFQSQRNDIYDAYFKKLQDAGRVYEDEGAWRFRFDRSKPVTFHDLICGNITIDYRDASNTPDMAIRRADGSYIFHFVNVVDDIEMKMTHVIRGEDHIMNTPKHIQLFEAFGVTPPVFAHMPLILNQDGSKMSKRDVGAALGTYPEEGFLPEGVMNFLALLGWSPKDDTEIFSPQELIGRFSLEAVNHSAAKFDITKCRWVNQQHIIALPAEEFALRARPFCLKAGLPDSPILDAAIATVQTKVQTLAEVPDKIRFFFDLGMDPEAVSKVQPEALELLFKLADRLEQEPEWDGHELIGVLKAFAKENGVKMGAVMFPARVALTGLSGGPDLSSVFSLLGREETVRRIRSFSLD.

The 'HIGH' region signature appears at 10–20 (PSPTGYLHIGG). The 'KMSKS' region motif lies at 211–215 (KMSKR). Lys214 serves as a coordination point for ATP.

The protein belongs to the class-I aminoacyl-tRNA synthetase family. Glutamate--tRNA ligase type 1 subfamily. Monomer.

Its subcellular location is the cytoplasm. It carries out the reaction tRNA(Glu) + L-glutamate + ATP = L-glutamyl-tRNA(Glu) + AMP + diphosphate. Functionally, catalyzes the attachment of glutamate to tRNA(Glu) in a two-step reaction: glutamate is first activated by ATP to form Glu-AMP and then transferred to the acceptor end of tRNA(Glu). In Akkermansia muciniphila (strain ATCC BAA-835 / DSM 22959 / JCM 33894 / BCRC 81048 / CCUG 64013 / CIP 107961 / Muc), this protein is Glutamate--tRNA ligase.